The following is a 93-amino-acid chain: DNA-binding protein HB1 (93 aa).

This sequence belongs to the bacterial histone-like protein family. As to quaternary structure, homodimer.

In terms of biological role, histone-like DNA-binding protein which is capable of wrapping DNA to stabilize it, and thus to prevent its denaturation under extreme environmental conditions. The chain is DNA-binding protein HB1 (hup) from Bifidobacterium longum (strain NCC 2705).